An 857-amino-acid chain; its full sequence is Protein sip-5 (857 aa).

Disordered stretches follow at residues 1 to 81 (MGNA…ARRL), 157 to 231 (GLPI…FKPT), 384 to 416 (SESS…APNV), 466 to 517 (FGRR…GNRR), 545 to 747 (KAEK…PMFN), and 763 to 857 (HAGK…QVTL). Composition is skewed to basic and acidic residues over residues 7–16 (KESRGDDSGR) and 36–48 (ESSR…RHDL). Positions 49–61 (TGLLGRAAGGSSS) are enriched in low complexity. Residues 62–81 (HADERHERKETKQEREARRL) show a composition bias toward basic and acidic residues. Polar residues-rich tracts occupy residues 179–191 (ASPT…TNHL) and 199–208 (SLSTASEHST). 3 stretches are compositionally biased toward low complexity: residues 209-230 (SNAG…PFKP), 384-394 (SESSVNSGSLS), and 476-504 (SASA…TANT). A compositionally biased stretch (basic and acidic residues) spans 545–572 (KAEKEEQKEAKKREKEREKAEKKAEKAA). 2 stretches are compositionally biased toward low complexity: residues 586–604 (SRSG…PGLS) and 621–645 (ASVA…ALAP). Residues 648 to 657 (STKDKGKAVD) are compositionally biased toward basic and acidic residues. Residues 688–697 (SSASSASSSA) are compositionally biased toward low complexity. Residues 698–712 (VESNQGSYVPPSNLQ) show a composition bias toward polar residues. A compositionally biased stretch (basic and acidic residues) spans 783–799 (ETAKSGEGAGEHVEHVL). 2 stretches are compositionally biased toward polar residues: residues 800-838 (DSQT…STAS) and 845-857 (NETT…QVTL).

Belongs to the SIP5 family.

It is found in the cytoplasm. Its function is as follows. May negatively regulate the snf-1 kinase. The chain is Protein sip-5 (sip-5) from Neurospora crassa (strain ATCC 24698 / 74-OR23-1A / CBS 708.71 / DSM 1257 / FGSC 987).